Consider the following 553-residue polypeptide: Phospholipase-B 81 (553 aa).

The first 35 residues, M1–R35, serve as a signal peptide directing secretion. N-linked (GlcNAc...) asparagine glycans are attached at residues N69, N313, N416, and N531.

It belongs to the phospholipase B-like family. Expressed by the venom gland.

It is found in the secreted. In terms of biological role, may cause hemolysis. The sequence is that of Phospholipase-B 81 from Drysdalia coronoides (White-lipped snake).